Consider the following 660-residue polypeptide: ATPase WRNIP1 (660 aa).

The UBZ4-type zinc-finger motif lies at 17–44 (QVQCPVCQQMMPAAHINSHLDRCLLLHP). Zn(2+) contacts are provided by cysteine 20, cysteine 23, histidine 31, histidine 35, and cysteine 39. The interval 48 to 191 (AEPAAGSHRA…DDPGHWDADA (144 aa)) is disordered. 2 positions are modified to phosphoserine: serine 65 and serine 75. A compositionally biased stretch (polar residues) spans 76-89 (ESSALKQPATPTAA). Residue lysine 81 forms a Glycyl lysine isopeptide (Lys-Gly) (interchain with G-Cter in ubiquitin) linkage. Threonine 85 carries the post-translational modification Phosphothreonine. Serine 91 and serine 92 each carry phosphoserine. A compositionally biased stretch (acidic residues) spans 92-104 (SEGEGEEGDDGGE). Threonine 116 carries the post-translational modification Phosphothreonine. Residues 135-155 (ARKGMGKRPAAAAAAGSASPR) show a composition bias toward low complexity. Residue lysine 141 forms a Glycyl lysine isopeptide (Lys-Gly) (interchain with G-Cter in ubiquitin) linkage. Phosphoserine is present on serine 153. Over residues 159–182 (EAEAQEEEEAGVDGDGDADVDGED) the composition is skewed to acidic residues. Lysine 220 participates in a covalent cross-link: Glycyl lysine isopeptide (Lys-Gly) (interchain with G-Cter in ubiquitin). ATP is bound at residue 265-271 (PGCGKTT). Residues lysine 296, lysine 305, lysine 311, lysine 317, and lysine 330 each participate in a glycyl lysine isopeptide (Lys-Gly) (interchain with G-Cter in ubiquitin) cross-link. A Glycyl lysine isopeptide (Lys-Gly) (interchain with G-Cter in SUMO2); alternate cross-link involves residue lysine 477. A Glycyl lysine isopeptide (Lys-Gly) (interchain with G-Cter in ubiquitin); alternate cross-link involves residue lysine 477. Tyrosine 529 and tyrosine 557 each carry phosphotyrosine. Residue lysine 622 forms a Glycyl lysine isopeptide (Lys-Gly) (interchain with G-Cter in ubiquitin) linkage. Lysine 628 participates in a covalent cross-link: Glycyl lysine isopeptide (Lys-Gly) (interchain with G-Cter in ubiquitin); alternate. At lysine 628 the chain carries N6-acetyllysine; alternate. Lysine 631 is covalently cross-linked (Glycyl lysine isopeptide (Lys-Gly) (interchain with G-Cter in ubiquitin)).

This sequence belongs to the AAA ATPase family. RarA/MGS1/WRNIP1 subfamily. As to quaternary structure, forms homooligomers, possibly octamers. Directly interacts with POLD1, POLD2 and POLD4. Interacts with the N-terminal domain of WRN. Interacts (via UBZ4-type zinc finger) with monoubiquitin and polyubiquitin. Interacts with TRIM14 and PPP6C; these interactions positively regulate the RIGI signaling pathway. Post-translationally, sumoylated with SUMO1 and SUMO2/3. In terms of tissue distribution, ubiquitously expressed.

Its subcellular location is the nucleus. The protein resides in the cytoplasm. It catalyses the reaction ATP + H2O = ADP + phosphate + H(+). In terms of biological role, functions as a modulator of initiation or reinitiation events during DNA polymerase delta-mediated DNA synthesis. In the presence of ATP, stimulation of DNA polymerase delta-mediated DNA synthesis is decreased. Also plays a role in the innate immune defense against viruses. Stabilizes the RIGI dsRNA interaction and promotes RIGI 'Lys-63'-linked polyubiquitination. In turn, RIGI transmits the signal through mitochondrial MAVS. The protein is ATPase WRNIP1 of Mus musculus (Mouse).